The sequence spans 330 residues: MAQLPPKIPTMATAWPEFGGGHHHHAAHGHHHQRSPSMGAFLAAPLPPFPLPPPAPANGGAQQQQQQQQHQPSWVDEFLDFSATKRGAHRRSVSDSVAFLDPVSDDNAGVGAHDFDRLDDDQLMSMFSDDLQPPPPQQQPAAPAASASSPSDHNSMNDEKQDKGETDEAQSECDGATPGQPASPATVDPKRVKRILANRQSAQRSRVRKLQYISELERSVTSLQTEVSALSPRVAFLDHQRSLLTLGNSHLKQRIAALAQDKIFKDGGTEEGDREAAANLPPAKPQERGIPTGGRGPGPRPRQCRPDRQRGGRRGRAMPALVIGRDPDAL.

A disordered region spans residues 1–207 (MAQLPPKIPT…NRQSAQRSRV (207 aa)). The segment covering 21–34 (GHHHHAAHGHHHQR) has biased composition (basic residues). Pro residues predominate over residues 45–56 (PLPPFPLPPPAP). Low complexity-rich tracts occupy residues 57 to 72 (ANGG…QHQP) and 139 to 151 (QPAA…SSPS). Positions 155 to 166 (SMNDEKQDKGET) are enriched in basic and acidic residues. Residues 188–244 (DPKRVKRILANRQSAQRSRVRKLQYISELERSVTSLQTEVSALSPRVAFLDHQRSLL) enclose the bZIP domain. The tract at residues 190–209 (KRVKRILANRQSAQRSRVRK) is basic motif. The leucine-zipper stretch occupies residues 216–244 (LERSVTSLQTEVSALSPRVAFLDHQRSLL). Positions 267–330 (GGTEEGDREA…LVIGRDPDAL (64 aa)) are disordered.

Expressed in roots, shoots and panicles.

It localises to the nucleus. Transcription regulator. This is Basic leucine zipper 2 (BZIP02) from Oryza sativa subsp. japonica (Rice).